A 333-amino-acid polypeptide reads, in one-letter code: Probable G-protein coupled receptor 33 (333 aa).

Topologically, residues 1–30 (MDLINSTDYLINASTLVRNSTQFLAPASKM) are extracellular. N-linked (GlcNAc...) asparagine glycosylation is found at Asn5, Asn12, and Asn19. A helical membrane pass occupies residues 31–53 (IIALSLYISSIIGTITNGLYLWV). Residues 54–64 (LRFKMKQTVNT) lie on the Cytoplasmic side of the membrane. The chain crosses the membrane as a helical span at residues 65 to 86 (LLFFHLILSYFISTMILPFMAT). At 87 to 103 (SQLQDNHWNFGTALCKV) the chain is on the extracellular side. A disulfide bridge connects residues Cys101 and Cys179. The chain crosses the membrane as a helical span at residues 104–124 (FNGTLSLGMFTSVFFLSAIGL). Residues 125-143 (DRYLLTLHPVWSQQHRTPR) lie on the Cytoplasmic side of the membrane. Residues 144-165 (WASSIVLGVWISAAALSIPYLI) form a helical membrane-spanning segment. Topologically, residues 166–209 (FRQTHHDRKGKVTCQNNYAVSTNWESKEMQALRQWIHVACFISR) are extracellular. Residues 210–230 (FLLGFLLPFFIIIFCYERVAS) traverse the membrane as a helical segment. Topologically, residues 231-246 (KVKERSLFKSSKPFKV) are cytoplasmic. A helical transmembrane segment spans residues 247-268 (MMTAIISFFVCWMPYHIHQGLL). Residues 269 to 283 (LTMNQSLLLELTLIL) lie on the Extracellular side of the membrane. Asn272 is a glycosylation site (N-linked (GlcNAc...) asparagine). Residues 284 to 303 (TVLTTSFNTIFSPTLYLFVG) form a helical membrane-spanning segment. Residues 304 to 333 (ENFKKVFKKSILALFESTFSEDSSVERTQT) lie on the Cytoplasmic side of the membrane.

Belongs to the G-protein coupled receptor 1 family.

Its subcellular location is the cell membrane. Functionally, orphan receptor; could be a chemoattractant receptor. The chain is Probable G-protein coupled receptor 33 (GPR33) from Pan paniscus (Pygmy chimpanzee).